The sequence spans 402 residues: Arginine deiminase (402 aa).

Cys-391 (amidino-cysteine intermediate) is an active-site residue.

It belongs to the arginine deiminase family.

The protein resides in the cytoplasm. It catalyses the reaction L-arginine + H2O = L-citrulline + NH4(+). Its pathway is amino-acid degradation; L-arginine degradation via ADI pathway; carbamoyl phosphate from L-arginine: step 1/2. This chain is Arginine deiminase, found in Mycobacterium marinum (strain ATCC BAA-535 / M).